The chain runs to 43 residues: Protein PsbN (43 aa).

Residues 7–27 (LSIAIGSILLVITGFAIYTAF) traverse the membrane as a helical segment.

It belongs to the PsbN family.

It is found in the cellular thylakoid membrane. Its function is as follows. May play a role in photosystem I and II biogenesis. In Crocosphaera subtropica (strain ATCC 51142 / BH68) (Cyanothece sp. (strain ATCC 51142)), this protein is Protein PsbN.